Here is a 528-residue protein sequence, read N- to C-terminus: Peptide chain release factor 3 (528 aa).

The tr-type G domain occupies 10–280; the sequence is AKRRTFGIIS…IDMAPAPGPR (271 aa). GTP is bound by residues 19 to 26, 87 to 91, and 141 to 144; these read SHPDAGKT, DTPGH, and NKLD.

It belongs to the TRAFAC class translation factor GTPase superfamily. Classic translation factor GTPase family. PrfC subfamily.

The protein localises to the cytoplasm. In terms of biological role, increases the formation of ribosomal termination complexes and stimulates activities of RF-1 and RF-2. It binds guanine nucleotides and has strong preference for UGA stop codons. It may interact directly with the ribosome. The stimulation of RF-1 and RF-2 is significantly reduced by GTP and GDP, but not by GMP. This Desulfotalea psychrophila (strain LSv54 / DSM 12343) protein is Peptide chain release factor 3.